Here is a 578-residue protein sequence, read N- to C-terminus: Arginine--tRNA ligase (578 aa).

Positions 127 to 137 match the 'HIGH' region motif; that stretch reads PNLAKEMHVGH.

This sequence belongs to the class-I aminoacyl-tRNA synthetase family. In terms of assembly, monomer.

The protein resides in the cytoplasm. It catalyses the reaction tRNA(Arg) + L-arginine + ATP = L-arginyl-tRNA(Arg) + AMP + diphosphate. The sequence is that of Arginine--tRNA ligase from Pseudomonas fluorescens (strain ATCC BAA-477 / NRRL B-23932 / Pf-5).